The primary structure comprises 202 residues: Outer-membrane lipoprotein carrier protein (202 aa).

The signal sequence occupies residues 1–20 (MKKQLLIGSVLLVASSQVWA).

Belongs to the LolA family. In terms of assembly, monomer.

The protein localises to the periplasm. Participates in the translocation of lipoproteins from the inner membrane to the outer membrane. Only forms a complex with a lipoprotein if the residue after the N-terminal Cys is not an aspartate (The Asp acts as a targeting signal to indicate that the lipoprotein should stay in the inner membrane). The chain is Outer-membrane lipoprotein carrier protein from Aeromonas salmonicida (strain A449).